We begin with the raw amino-acid sequence, 152 residues long: UPF0266 membrane protein plu2700 (152 aa).

The next 3 helical transmembrane spans lie at 6–26, 45–65, and 67–87; these read IALT…EFVV, IDAL…ITVY, and SRLT…IAYI.

Belongs to the UPF0266 family.

The protein resides in the cell inner membrane. The polypeptide is UPF0266 membrane protein plu2700 (Photorhabdus laumondii subsp. laumondii (strain DSM 15139 / CIP 105565 / TT01) (Photorhabdus luminescens subsp. laumondii)).